The primary structure comprises 182 residues: MGDEEKRNRAITARRQHLKSVMLQIAATELEKEESRRESEKQNYLSEHCPPLHIPGSMSEVQELCKQLHAKIDAAEEEKYDMEVKVQKSSKELEDMNQKLFDLRGKFKRPPLRRVRMSADAMLKALLGSKHKVCMDLRANLKQVKKEDTEKERDLRDVGDWRKNIEEKSGMEGRKKMFESES.

G2 is subject to N-acetylglycine. The interval 2–48 (GDEEKRNRAITARRQHLKSVMLQIAATELEKEESRRESEKQNYLSEH) is involved in binding TNC. The residue at position 12 (T12) is a Phosphothreonine. A compositionally biased stretch (basic and acidic residues) spans 29 to 41 (ELEKEESRRESEK). Residues 29-53 (ELEKEESRRESEKQNYLSEHCPPLH) form a disordered region. The involved in binding TNC and actin stretch occupies residues 97-117 (NQKLFDLRGKFKRPPLRRVRM). S118 bears the Phosphoserine mark.

Belongs to the troponin I family. Binds to actin and tropomyosin.

Its function is as follows. Troponin I is the inhibitory subunit of troponin, the thin filament regulatory complex which confers calcium-sensitivity to striated muscle actomyosin ATPase activity. This is Troponin I, fast skeletal muscle (Tnni2) from Rattus norvegicus (Rat).